The chain runs to 83 residues: Hainantoxin-III 6 (83 aa).

The first 21 residues, 1 to 21, serve as a signal peptide directing secretion; it reads MKASMFLALAGLVLLFVVGYA. Positions 22–48 are excised as a propeptide; sequence SESEEKESPRELLSKIFAVDDFKGEER. Cystine bridges form between Cys-50/Cys-65, Cys-57/Cys-70, and Cys-64/Cys-77. Leu-81 is modified (leucine amide).

It belongs to the neurotoxin 10 (Hwtx-1) family. 15 (Hntx-3) subfamily. Monomer. In terms of tissue distribution, expressed by the venom gland.

The protein localises to the secreted. In terms of biological role, selective antagonist of neuronal tetrodotoxin (TTX)-sensitive voltage-gated sodium channels (IC(50)=1270 nM on Nav1.1/SCN1A, 270 nM on Nav1.2/SCN2A, 491 nM on Nav1.3/SCN3A and 232 nM on Nav1.7/SCN9A). This toxin suppress Nav1.7 current amplitude without significantly altering the activation, inactivation, and repriming kinetics. Short extreme depolarizations partially activate the toxin-bound channel, indicating voltage-dependent inhibition of this toxin. This toxin increases the deactivation of the Nav1.7 current after extreme depolarizations. The toxin-Nav1.7 complex is gradually dissociated upon prolonged strong depolarizations in a voltage-dependent manner, and the unbound toxin rebinds to Nav1.7 after a long repolarization. Moreover, analysis of chimeric channels showed that the DIIS3-S4 linker is critical for toxin binding to Nav1.7. These data are consistent with this toxin interacting with Nav1.7 site 4 and trapping the domain II voltage sensor in the closed state. This chain is Hainantoxin-III 6, found in Cyriopagopus hainanus (Chinese bird spider).